We begin with the raw amino-acid sequence, 238 residues long: MPNLHSLPLGTRPENAIRNNGPDNLVLERAKLRELAEGWPCYRDACEWENFESIFHPDAVVYTTWSGRVGYKDFIAGSKAGMDNGAFIMHRCHGATTDITADATRAVTKLKATITQRFVIDGIEVDAEADCRFCFFFEKADVDGKGPRWGARFVRHWYEKDKLLPVVPGRFPKIDVDKLNSYPEGYKCLVYCQELTMGVKVLQDMPGHRRHAGTLSGEKHDLLYRLAKDWLDGKEIDV.

Positions 1-20 (MPNLHSLPLGTRPENAIRNN) are disordered.

Belongs to the PEP2 family.

This is an uncharacterized protein from Emericella nidulans (strain FGSC A4 / ATCC 38163 / CBS 112.46 / NRRL 194 / M139) (Aspergillus nidulans).